The chain runs to 396 residues: Elongation factor Tu (396 aa).

The region spanning 10-206 (KPHCNIGTIG…AVDSYIPQPE (197 aa)) is the tr-type G domain. A G1 region spans residues 19–26 (GHVDHGKT). 19-26 (GHVDHGKT) contributes to the GTP binding site. Residue T26 participates in Mg(2+) binding. Positions 60 to 64 (GITIS) are G2. The G3 stretch occupies residues 81–84 (DCPG). GTP contacts are provided by residues 81–85 (DCPGH) and 136–139 (NKCD). Residues 136-139 (NKCD) are G4. The segment at 174–176 (SAL) is G5.

Belongs to the TRAFAC class translation factor GTPase superfamily. Classic translation factor GTPase family. EF-Tu/EF-1A subfamily. In terms of assembly, monomer.

It is found in the cytoplasm. It carries out the reaction GTP + H2O = GDP + phosphate + H(+). In terms of biological role, GTP hydrolase that promotes the GTP-dependent binding of aminoacyl-tRNA to the A-site of ribosomes during protein biosynthesis. The protein is Elongation factor Tu of Rhodopseudomonas palustris (strain BisA53).